We begin with the raw amino-acid sequence, 362 residues long: Peptide chain release factor 1 (362 aa).

Position 237 is an N5-methylglutamine (Gln237).

The protein belongs to the prokaryotic/mitochondrial release factor family. Post-translationally, methylated by PrmC. Methylation increases the termination efficiency of RF1.

It is found in the cytoplasm. Peptide chain release factor 1 directs the termination of translation in response to the peptide chain termination codons UAG and UAA. This is Peptide chain release factor 1 from Vibrio vulnificus (strain CMCP6).